The primary structure comprises 401 residues: tRNA(Met) cytidine acetate ligase (401 aa).

ATP is bound by residues 7-20 (IVEY…HLYH), glycine 102, asparagine 164, and arginine 189.

Belongs to the TmcAL family.

Its subcellular location is the cytoplasm. The enzyme catalyses cytidine(34) in elongator tRNA(Met) + acetate + ATP = N(4)-acetylcytidine(34) in elongator tRNA(Met) + AMP + diphosphate. In terms of biological role, catalyzes the formation of N(4)-acetylcytidine (ac(4)C) at the wobble position of elongator tRNA(Met), using acetate and ATP as substrates. First activates an acetate ion to form acetyladenylate (Ac-AMP) and then transfers the acetyl group to tRNA to form ac(4)C34. This chain is tRNA(Met) cytidine acetate ligase, found in Caldanaerobacter subterraneus subsp. tengcongensis (strain DSM 15242 / JCM 11007 / NBRC 100824 / MB4) (Thermoanaerobacter tengcongensis).